Reading from the N-terminus, the 67-residue chain is Metallothionein-A (67 aa).

This sequence belongs to the metallothionein superfamily. Type 4 family.

Metallothioneins have a high content of cysteine residues that bind various heavy metals. The polypeptide is Metallothionein-A (Sphaerechinus granularis (Purple sea urchin)).